The sequence spans 308 residues: Elongation factor Ts (308 aa).

Positions 80-83 (TDFV) are involved in Mg(2+) ion dislocation from EF-Tu.

Belongs to the EF-Ts family.

It is found in the cytoplasm. Functionally, associates with the EF-Tu.GDP complex and induces the exchange of GDP to GTP. It remains bound to the aminoacyl-tRNA.EF-Tu.GTP complex up to the GTP hydrolysis stage on the ribosome. The sequence is that of Elongation factor Ts from Rhizobium leguminosarum bv. trifolii (strain WSM2304).